The following is a 907-amino-acid chain: Coatomer subunit beta'-1 (907 aa).

WD repeat units lie at residues 13 to 52 (QRSE…MVKS), 55 to 94 (VSEL…KVKV), 97 to 136 (AHTD…MCTQ), 140 to 180 (GHSH…PNFT), 183 to 224 (GHQK…CVQT), 227 to 266 (GHTH…LENT), 269 to 309 (YGLE…ASMD), 351 to 389 (SCDL…NRSF), and 461 to 501 (RIDV…SYLE). Acidic residues-rich tracts occupy residues 850-866 (ETED…EEVL) and 874-887 (STDE…DEPE). The segment at 850–887 (ETEDALDENGEPDEEVLEENKVEESTDEAVEVDADEPE) is disordered.

The protein belongs to the WD repeat COPB2 family. As to quaternary structure, oligomeric complex that consists of at least the alpha, beta, beta', gamma, delta, epsilon and zeta subunits.

It localises to the cytoplasm. It is found in the golgi apparatus membrane. The protein resides in the cytoplasmic vesicle. The protein localises to the COPI-coated vesicle membrane. In terms of biological role, the coatomer is a cytosolic protein complex that binds to dilysine motifs and reversibly associates with Golgi non-clathrin-coated vesicles, which further mediate biosynthetic protein transport from the ER, via the Golgi up to the trans Golgi network. Coatomer complex is required for budding from Golgi membranes, and is essential for the retrograde Golgi-to-ER transport of dilysine-tagged proteins. The polypeptide is Coatomer subunit beta'-1 (Oryza sativa subsp. japonica (Rice)).